The sequence spans 225 residues: Probable polyketide biosynthesis zinc-dependent hydrolase BaeB (225 aa).

Positions 62, 64, 66, 67, 123, 140, and 181 each coordinate Zn(2+).

Belongs to the metallo-beta-lactamase superfamily. Zn(2+) is required as a cofactor.

The protein localises to the cytoplasm. The protein operates within antibiotic biosynthesis; bacillaene biosynthesis. Probably involved in some intermediate steps for the synthesis of the antibiotic polyketide bacillaene which is involved in secondary metabolism. The chain is Probable polyketide biosynthesis zinc-dependent hydrolase BaeB (baeB) from Bacillus velezensis (strain DSM 23117 / BGSC 10A6 / LMG 26770 / FZB42) (Bacillus amyloliquefaciens subsp. plantarum).